We begin with the raw amino-acid sequence, 126 residues long: MFYLSDIEEEASAGAEPTYNFWEVLLFSNTQENLVTVVGELHTLTDRVVHYKIEPESREVTATTLPSLLALLLEKRNQARRLYRDVLSMKMSELDWDIDDLFTQLQEELTRTDDTLSMYPRRRFYH.

In terms of assembly, g proteins are composed of 3 units, alpha, beta and gamma. GPG1 interacts with the beta subunits GBP1 and GPB2.

Its subcellular location is the cytoplasm. Its function is as follows. Gamma subunit of a guanine nucleotide-binding protein (G protein). G proteins are involved as modulators or transducers in various transmembrane signaling systems. The beta and gamma chains are required for the GTPase activity, for replacement of GDP by GTP, and for G protein-effector interaction. Involved in the determination of the cAMP level according to nutritional conditions, most probably as a regulator of cAMP phosphodiesterase. Required for the control of pseudohyphal and haploid invasive growth. The chain is Heterotrimeric G protein gamma subunit GPG1 (GPG1) from Saccharomyces cerevisiae (strain ATCC 204508 / S288c) (Baker's yeast).